The chain runs to 123 residues: Large ribosomal subunit protein uL29 (123 aa).

Belongs to the universal ribosomal protein uL29 family.

The protein is Large ribosomal subunit protein uL29 (RPL35) of Theileria lestoquardi.